The following is a 261-amino-acid chain: MAALWLLLLVLSLHCMGAGGFVAHVESTCVLDDAGTPQDFTYCVSFNKDLLACWDPIVGKIVPCEFGVLYPLAENFSRILNKEESLLQRLQNGLPDCASHTQPFWNALTHRTRPPSVRVAQTTPFNTREPVMLACYVWGFYPADVTITWMKNGQLVPSHSNKEKTAQPNGDWTYQTVSYLALTPSYGDVYTCVVQHSGTSEPIRGDWTPGLSPIQTVKVSVSAATLGLGFIIFCVGFFRWRKSHSSSYTPLSGSTYPEGRH.

An N-terminal signal peptide occupies residues M1 to A18. The segment at G19 to T112 is beta-1. At G19–K218 the chain is on the lumenal side. 3 disulfide bridges follow: C29-C97, C43-C53, and C135-C192. An N-linked (GlcNAc...) asparagine glycan is attached at N75. Residues R113–W207 are beta-2. Residues P114–R204 form the Ig-like C1-type domain. The tract at residues T208–K218 is connecting peptide. Residues V219–R239 traverse the membrane as a helical segment. Residues W240–H261 are Cytoplasmic-facing. The YXXZ motif motif lies at Y248 to L251.

It belongs to the MHC class II family. In terms of assembly, heterodimer of an alpha chain (DMA) and a beta chain (DMB). Interacts with MHCII; this interaction mediates rapid selection of high-affinity peptides.

It is found in the late endosome membrane. The protein localises to the lysosome membrane. Plays a critical role in catalyzing the release of class II-associated invariant chain peptide (CLIP) from newly synthesized MHC class II molecules and freeing the peptide binding site for acquisition of antigenic peptides. In Mus musculus (Mouse), this protein is Class II histocompatibility antigen, M beta 1 chain (H2-DMb1).